Reading from the N-terminus, the 403-residue chain is Esterase LipC (403 aa).

Active-site residues include Ser-237, Asp-334, and His-367.

The protein belongs to the 'GDXG' lipolytic enzyme family.

It localises to the cell surface. Its subcellular location is the secreted. The protein resides in the cell wall. The protein localises to the capsule. It catalyses the reaction a fatty acid ester + H2O = an aliphatic alcohol + a fatty acid + H(+). The catalysed reaction is a butanoate ester + H2O = an aliphatic alcohol + butanoate + H(+). It carries out the reaction a hexanoate ester + H2O = an aliphatic alcohol + hexanoate + H(+). The enzyme catalyses an acetyl ester + H2O = an aliphatic alcohol + acetate + H(+). It catalyses the reaction an octanoate ester + H2O = an aliphatic alcohol + octanoate + H(+). The catalysed reaction is decanoate ester + H2O = decanoate + an aliphatic alcohol + H(+). Esterase that can hydrolyze short-chain esters with the carbon chain containing 2 to 10 carbon atoms. Does not have lipase activity. Is highly immunogenic and elicits strong humoral immune responses in both HIV-negative (HIV-) and HIV-positive (HIV+) tuberculosis (TB) patients. Also elicits pro-inflammatory cytokine and chemokine responses from macrophages and pulmonary epithelial cells. May participate in the progression of active tuberculosis both by contributing to the utilization of lipid substrates for bacterial growth and replication, and by modulating immune responses. This is Esterase LipC from Mycobacterium tuberculosis (strain ATCC 25618 / H37Rv).